A 259-amino-acid polypeptide reads, in one-letter code: Phosphatidylglycerol--prolipoprotein diacylglyceryl transferase (259 aa).

The next 7 helical transmembrane spans lie at 9–29 (LGPL…ILAV), 48–68 (DFIL…YVIF), 83–103 (IWHG…VLFI), 114–133 (DFLD…GRWG), 167–187 (TPTF…IMIL), 197–217 (GEVA…IEGM), and 227–247 (LRVS…LIVI). Residue arginine 131 coordinates a 1,2-diacyl-sn-glycero-3-phospho-(1'-sn-glycerol).

The protein belongs to the Lgt family.

The protein localises to the cell membrane. The catalysed reaction is L-cysteinyl-[prolipoprotein] + a 1,2-diacyl-sn-glycero-3-phospho-(1'-sn-glycerol) = an S-1,2-diacyl-sn-glyceryl-L-cysteinyl-[prolipoprotein] + sn-glycerol 1-phosphate + H(+). Its pathway is protein modification; lipoprotein biosynthesis (diacylglyceryl transfer). Catalyzes the transfer of the diacylglyceryl group from phosphatidylglycerol to the sulfhydryl group of the N-terminal cysteine of a prolipoprotein, the first step in the formation of mature lipoproteins. The chain is Phosphatidylglycerol--prolipoprotein diacylglyceryl transferase from Streptococcus mutans serotype c (strain ATCC 700610 / UA159).